A 488-amino-acid polypeptide reads, in one-letter code: Transcriptional coactivator YAP1 (488 aa).

Pro residues predominate over residues 1-21 (MEPAQQPPPQPAPQGPAPPSV). A disordered region spans residues 1 to 47 (MEPAQQPPPQPAPQGPAPPSVSPAGTPAAPPAPPAGHQVVHVRGDSE). Serine 46 bears the Phosphoserine mark. Phosphothreonine is present on threonine 48. Residues 71 to 85 (MRLRKLPDSFFKPPE) adopt a coiled-coil conformation. An N6-lactoyllysine modification is found at lysine 75. The disordered stretch occupies residues 76 to 99 (LPDSFFKPPEPKSHSRQASTDAGT). A phosphoserine mark is found at serine 90 and serine 94. Threonine 95 is modified (phosphothreonine). A Phosphothreonine; by MAPK8 and MAPK9 modification is found at threonine 104. Serine 112, serine 113, serine 116, and serine 123 each carry phosphoserine. Phosphoserine; by LATS1 and LATS2 is present on serine 149. 2 consecutive WW domains span residues 156–189 (VPLP…DPRK) and 215–248 (GPLP…DPRL). 2 disordered regions span residues 261–293 (SAPV…QIQL) and 339–393 (TLEQ…SSYS). At serine 274 the chain carries Phosphoserine. The interval 276–488 (QGGVLGGGSS…LDKESFLTWL (213 aa)) is transactivation domain. Residues 283–344 (GSSNQQQQIQ…SQLPTLEQDG (62 aa)) adopt a coiled-coil conformation. Residues 348 to 376 (NAVSSPGMSQELRTMTTNSSDPFLNSGTY) are compositionally biased toward polar residues. Serine 352 bears the Phosphoserine; by MAPK8 and MAPK9 mark. Serine 356, serine 366, serine 367, and serine 373 each carry phosphoserine. Phosphoserine; by LATS1 and LATS2 is present on serine 382. The span at 384–393 (DSGLSMSSYS) shows a compositional bias: polar residues. Phosphoserine; by CK1 occurs at positions 385 and 388. Tyrosine 392 is subject to Phosphotyrosine; by ABL1. Residue threonine 397 is modified to Phosphothreonine; by MAPK8 and MAPK9.

It belongs to the YAP1 family. As to quaternary structure, part of a complex when phosphorylated that contains DSG3, PKP1, YAP1 and YWHAG; the complex is required for localization of DSG3 and YAP1 to the cell membrane in keratinocytes. Binds to the SH3 domain of the YES kinase. Binds to WBP1 and WBP2. Binds, in vitro, through the WW1 domain, to neural isoforms of ENAH that contain the PPSY motif. The phosphorylated form interacts with YWHAB. Interacts (via WW domains) with LATS1 (via PPxY motif 2). Interacts with LATS2. Interacts (via WW domain 1) with isoform JM-A of ERBB4 (via PPxY motif 2). Interacts with TEAD1, TEAD2 and TEAD3. Interacts with TP73 and HCK. Interacts with RUNX1. Interacts with TEAD4. Interacts (via WW domains) with PTPN14 (via PPxY motif 2); this interaction leads to the cytoplasmic sequestration of YAP1 and inhibits its transcriptional coactivator activity. Interacts (when phosphorylated at Ser-112) with SMAD2, SMAD3 and WWTR1. Interacts with PRRG2 (via cytoplasmic domain). Interacts (via WW domains) with PRRG4 (via cytoplasmic domain). Interacts (phosphorylated) with CLDN18; the interaction sequesters YAP1 away from the nucleus and thereby restricts transcription of YAP1 target genes. Interacts with SMAD1. Interacts with AMOT; the interaction facilitates translocation of YAP1 to the cytoplasm and tight junctions. Interacts with AMOTL2, the interaction is required for ubiquitination of AMOTL2 and localization of YAP1 to tight junctions. Phosphorylated by LATS1 and LATS2; leading to cytoplasmic translocation and inactivation. Phosphorylated by ABL1; leading to YAP1 stabilization, enhanced interaction with TP73 and recruitment onto proapoptotic genes; in response to DNA damage. Phosphorylation at Ser-385 and Ser-388 by CK1 is triggered by previous phosphorylation at Ser-382 by LATS proteins and leads to YAP1 ubiquitination by SCF(beta-TRCP) E3 ubiquitin ligase and subsequent degradation. Phosphorylated at Thr-104, Ser-123, Ser-352 and Thr-397 by MAPK8/JNK1 and MAPK9/JNK2, which is required for the regulation of apoptosis by YAP1. Post-translationally, lactylation by AARS1 promotes nuclear localization and stabilization of YAP1, leading to increased Hippo signaling pathway. Delactylated by SIRT1. In terms of processing, ubiquitinated by SCF(beta-TRCP) E3 ubiquitin ligase. As to expression, isoforms lacking the transactivation domain seen in striatal neurons (at protein level). Ubiquitous. Isoform 2 is expressed at higher levels in the neural tissues. In the embryo, it is expressed in brain, eye, and the maxillary and frontonasal components of the primary palate.

It is found in the cytoplasm. Its subcellular location is the nucleus. The protein localises to the cell junction. The protein resides in the tight junction. It localises to the cell membrane. Functionally, transcriptional regulator with dual roles as a coactivator and corepressor. Critical downstream regulatory target in the Hippo signaling pathway, crucial for organ size control and tumor suppression by restricting proliferation and promoting apoptosis. The Hippo signaling pathway core involves a kinase cascade featuring STK3/MST2 and STK4/MST1, along with its regulatory partner SAV1, which phosphorylates and activates LATS1/2 in complex with their regulatory protein, MOB1. This activation leads to the phosphorylation and inactivation of the YAP1 oncoprotein and WWTR1/TAZ. Phosphorylation of YAP1 by LATS1/2 prevents its nuclear translocation, thereby regulating the expression of its target genes. The transcriptional regulation of gene expression requires TEAD transcription factors and modulates cell growth, anchorage-independent growth, and induction of epithelial-mesenchymal transition (EMT). Plays a key role in tissue tension and 3D tissue shape by regulating the cortical actomyosin network, acting via ARHGAP18, a Rho GTPase activating protein that suppresses F-actin polymerization. It also suppresses ciliogenesis by acting as a transcriptional corepressor of TEAD4 target genes AURKA and PLK1. In conjunction with WWTR1, regulates TGFB1-dependent SMAD2 and SMAD3 nuclear accumulation. Synergizes with WBP2 to enhance PGR activity. The sequence is that of Transcriptional coactivator YAP1 (Yap1) from Mus musculus (Mouse).